The chain runs to 758 residues: 5-methyltetrahydropteroyltriglutamate--homocysteine methyltransferase (758 aa).

5-methyltetrahydropteroyltri-L-glutamate is bound by residues 17 to 20 and Lys117; that span reads RELK. Residues 434–436 and Glu487 each bind L-homocysteine; that span reads IGS. Residues 434–436 and Glu487 each bind L-methionine; that span reads IGS. Residues 518–519 and Trp564 contribute to the 5-methyltetrahydropteroyltri-L-glutamate site; that span reads RC. Residue Asp602 coordinates L-homocysteine. Asp602 serves as a coordination point for L-methionine. A 5-methyltetrahydropteroyltri-L-glutamate-binding site is contributed by Glu608. 3 residues coordinate Zn(2+): His644, Cys646, and Glu668. His697 acts as the Proton donor in catalysis. Cys729 is a binding site for Zn(2+).

The protein belongs to the vitamin-B12 independent methionine synthase family. Zn(2+) is required as a cofactor.

It carries out the reaction 5-methyltetrahydropteroyltri-L-glutamate + L-homocysteine = tetrahydropteroyltri-L-glutamate + L-methionine. Its pathway is amino-acid biosynthesis; L-methionine biosynthesis via de novo pathway; L-methionine from L-homocysteine (MetE route): step 1/1. Functionally, catalyzes the transfer of a methyl group from 5-methyltetrahydrofolate to homocysteine resulting in methionine formation. In Yersinia pseudotuberculosis serotype I (strain IP32953), this protein is 5-methyltetrahydropteroyltriglutamate--homocysteine methyltransferase.